A 425-amino-acid polypeptide reads, in one-letter code: Ribosomal protein uS12 methylthiotransferase RimO (425 aa).

The MTTase N-terminal domain maps to 2–115 (KNFTVITLGC…IIDYIKQFSK (114 aa)). [4Fe-4S] cluster contacts are provided by C11, C47, C78, C142, C146, and C149. In terms of domain architecture, Radical SAM core spans 128–357 (VEPPSYRYIK…MARQAVISLE (230 aa)). Positions 360–425 (RALIGKKYEA…YEYDVKGVIV (66 aa)) constitute a TRAM domain.

Belongs to the methylthiotransferase family. RimO subfamily. It depends on [4Fe-4S] cluster as a cofactor.

Its subcellular location is the cytoplasm. The enzyme catalyses L-aspartate(89)-[ribosomal protein uS12]-hydrogen + (sulfur carrier)-SH + AH2 + 2 S-adenosyl-L-methionine = 3-methylsulfanyl-L-aspartate(89)-[ribosomal protein uS12]-hydrogen + (sulfur carrier)-H + 5'-deoxyadenosine + L-methionine + A + S-adenosyl-L-homocysteine + 2 H(+). Catalyzes the methylthiolation of an aspartic acid residue of ribosomal protein uS12. The sequence is that of Ribosomal protein uS12 methylthiotransferase RimO from Thermodesulfovibrio yellowstonii (strain ATCC 51303 / DSM 11347 / YP87).